Consider the following 577-residue polypeptide: Arginine--tRNA ligase (577 aa).

A 'HIGH' region motif is present at residues 124 to 132 (VAKEMHVGH).

It belongs to the class-I aminoacyl-tRNA synthetase family. In terms of assembly, monomer.

The protein localises to the cytoplasm. The enzyme catalyses tRNA(Arg) + L-arginine + ATP = L-arginyl-tRNA(Arg) + AMP + diphosphate. The polypeptide is Arginine--tRNA ligase (Salmonella typhi).